Consider the following 418-residue polypeptide: MEYNPFHNGHLYHLTSARELVRPDYTIAVMSGNFCQRGEPAVIDKFARAEIALRMGIDVVLELPVVFATQDAGGFAFGAVSVLDATGVVTDVVFGSESNDIGFLQRVAQILYEQPDEYQKFLHEELKKGYSFPNARKYALMRYFSMKGWNEEEVLRLEKSNDILGVEYIHSALKIGSNIRFHTIKRVGAEEKDTSFRGRFSSATAIRNLIREERWEEVRDSLPEDSFEILMREINEGRGPVFLENMGDFLLSFFRLKNMEFFERIHGFSEGLEKRFHICARQTGSYQDFLECVKAKRFTFSRIRRLALFSVFEVNKEFVEKSNAKGPQYIRILGFTEKGRKILSLMRKKAKLPIVTNMSLYRKVLEKTDLPVDKQLFFEQIDLDVRTTNFYSMFFPAVEQRCGERDFSIHPIFLRTET.

ATP contacts are provided by glycine 95, asparagine 161, and arginine 186.

This sequence belongs to the TmcAL family.

It is found in the cytoplasm. It catalyses the reaction cytidine(34) in elongator tRNA(Met) + acetate + ATP = N(4)-acetylcytidine(34) in elongator tRNA(Met) + AMP + diphosphate. Its function is as follows. Catalyzes the formation of N(4)-acetylcytidine (ac(4)C) at the wobble position of elongator tRNA(Met), using acetate and ATP as substrates. First activates an acetate ion to form acetyladenylate (Ac-AMP) and then transfers the acetyl group to tRNA to form ac(4)C34. In Thermotoga petrophila (strain ATCC BAA-488 / DSM 13995 / JCM 10881 / RKU-1), this protein is tRNA(Met) cytidine acetate ligase.